The chain runs to 168 residues: Putative adenylate kinase (168 aa).

Positions 10, 12, 13, 14, and 15 each coordinate ATP. Residues 28 to 51 are NMP; sequence HLNERIREEGLDAGRDEERDSLVA. The interval 97–107 is LID; it reads DRGEPAAKAAE. Residue R98 participates in ATP binding.

This sequence belongs to the adenylate kinase family. AK6 subfamily. As to quaternary structure, interacts with uS11. Not a structural component of 40S pre-ribosomes, but transiently interacts with them by binding to uS11.

It carries out the reaction AMP + ATP = 2 ADP. It catalyses the reaction ATP + H2O = ADP + phosphate + H(+). Functionally, broad-specificity nucleoside monophosphate (NMP) kinase that catalyzes the reversible transfer of the terminal phosphate group between nucleoside triphosphates and monophosphates. Also has ATPase activity. Involved in the late maturation steps of the 30S ribosomal particles, specifically 16S rRNA maturation. While NMP activity is not required for ribosome maturation, ATPase activity is. Associates transiently with small ribosomal subunit protein uS11. ATP hydrolysis breaks the interaction with uS11. May temporarily remove uS11 from the ribosome to enable a conformational change of the ribosomal RNA that is needed for the final maturation step of the small ribosomal subunit. The protein is Putative adenylate kinase of Natronomonas pharaonis (strain ATCC 35678 / DSM 2160 / CIP 103997 / JCM 8858 / NBRC 14720 / NCIMB 2260 / Gabara) (Halobacterium pharaonis).